Here is a 709-residue protein sequence, read N- to C-terminus: MVIRITPIAYYRNIGISAHIDAGKTTTTERILFYTGVNHKIGEVHTGSATMDWMEQEQERGITITSAATTCFWSGMAKQFPVHRINIIDTPGHVDFTIEVERSMRVLDGVVMVYCGVGGVQPQSETVWRQANKYKVPRIAFVNKMDRMGANYLHVVEELKTKLFANPVPIQLAIGSENKFTGVVDLIKMKAINWNDSDQGVTFFYEDIPNDLIELSNFWRNHLVESAVEESEELLDKYLSNSTQLTEYDIKQALRKRVLKNEILLVTCGSAFKNKGVQSMLDAVVEYLPSPTDLVSVKGILKKDGCALEERYVKDSEPFSALAFKVATDPFVGNLTFFRVYSGVVNSGDSIFNSVKEKRERFGRIVQMHANKREEIKSVYAGDIAAAIGLKDVSTGDTLCDCNHPIILESMEFPDPVISVMVEAKTKLDQEKMGLALSRLSQEDPSFRVWIDQDSGQTIIAGMGELHLEILVERMRREFSIEANVGKPQVAYRETIRSVIKQEGKFIRQSGGRGQFGHVWLLLEPMNINNESSSDSYKFFNKIVGGVIPKEYIPAVDKGIQEQISNGVLAGYPIVGVSVTIFDGSYHEVDSSEIAFKIAGSIAFKEGFMRANPVLLEPIMKVEIETPEEYMGDVIADLNRRRGIISNLENSMNIGRIIHAKVPLSEMFGYATALRSQTQGRASHSMEFLKYNEVPNNIAQSIIESRRVK.

One can recognise a tr-type G domain in the interval 9–292 (AYYRNIGISA…AVVEYLPSPT (284 aa)). Residues 18–25 (AHIDAGKT), 89–93 (DTPGH), and 143–146 (NKMD) each bind GTP.

This sequence belongs to the TRAFAC class translation factor GTPase superfamily. Classic translation factor GTPase family. EF-G/EF-2 subfamily.

It localises to the cytoplasm. Its function is as follows. Catalyzes the GTP-dependent ribosomal translocation step during translation elongation. During this step, the ribosome changes from the pre-translocational (PRE) to the post-translocational (POST) state as the newly formed A-site-bound peptidyl-tRNA and P-site-bound deacylated tRNA move to the P and E sites, respectively. Catalyzes the coordinated movement of the two tRNA molecules, the mRNA and conformational changes in the ribosome. The chain is Elongation factor G from Blochmanniella floridana.